We begin with the raw amino-acid sequence, 702 residues long: Elongation factor G (702 aa).

The tr-type G domain maps to 8-290 (ERYRNIGISA…AVIDYLPSPV (283 aa)). Residues 17 to 24 (AHIDAGKT), 88 to 92 (DTPGH), and 142 to 145 (NKMD) each bind GTP.

It belongs to the TRAFAC class translation factor GTPase superfamily. Classic translation factor GTPase family. EF-G/EF-2 subfamily.

The protein localises to the cytoplasm. Catalyzes the GTP-dependent ribosomal translocation step during translation elongation. During this step, the ribosome changes from the pre-translocational (PRE) to the post-translocational (POST) state as the newly formed A-site-bound peptidyl-tRNA and P-site-bound deacylated tRNA move to the P and E sites, respectively. Catalyzes the coordinated movement of the two tRNA molecules, the mRNA and conformational changes in the ribosome. The sequence is that of Elongation factor G from Acidovorax sp. (strain JS42).